A 434-amino-acid polypeptide reads, in one-letter code: Protein maelstrom homolog (434 aa).

Residues R4–E73 constitute a DNA-binding region (HMG box). 2 disordered regions span residues R62 to V94 and S357 to N385. The segment covering S357 to P371 has biased composition (polar residues).

Belongs to the maelstrom family. As to quaternary structure, interacts with SMARCB1, SIN3B and DDX4. Interacts with piRNA-associated proteins TDRD1, PIWIL1 and PIWIL2. Interacts with TEX19.

The protein resides in the cytoplasm. Its subcellular location is the nucleus. Plays a central role during spermatogenesis by repressing transposable elements and preventing their mobilization, which is essential for the germline integrity. Acts via the piRNA metabolic process, which mediates the repression of transposable elements during meiosis by forming complexes composed of piRNAs and Piwi proteins and governs the methylation and subsequent repression of transposons. Its association with piP-bodies suggests a participation in the secondary piRNAs metabolic process. Required for the localization of germ-cell factors to the meiotic nuage. The protein is Protein maelstrom homolog (MAEL) of Macaca fascicularis (Crab-eating macaque).